The sequence spans 544 residues: CTP synthase (544 aa).

Residues 1–265 (MTKFIFVTGG…DNIITEQLQL (265 aa)) form an amidoligase domain region. Residue S13 participates in CTP binding. S13 lines the UTP pocket. Residues 14–19 (SLGKGI) and D71 each bind ATP. Residues D71 and E139 each coordinate Mg(2+). Residues 146-148 (DIE), 186-191 (KTKPTQ), and K222 contribute to the CTP site. Residues 186 to 191 (KTKPTQ) and K222 contribute to the UTP site. The Glutamine amidotransferase type-1 domain maps to 290 to 544 (KIAMVGKYVD…VKAALNNKKA (255 aa)). G353 contacts L-glutamine. C380 serves as the catalytic Nucleophile; for glutamine hydrolysis. Residues 381–384 (LGMQ), E404, and R471 each bind L-glutamine. Active-site residues include H517 and E519.

Belongs to the CTP synthase family. In terms of assembly, homotetramer.

The enzyme catalyses UTP + L-glutamine + ATP + H2O = CTP + L-glutamate + ADP + phosphate + 2 H(+). It carries out the reaction L-glutamine + H2O = L-glutamate + NH4(+). It catalyses the reaction UTP + NH4(+) + ATP = CTP + ADP + phosphate + 2 H(+). It functions in the pathway pyrimidine metabolism; CTP biosynthesis via de novo pathway; CTP from UDP: step 2/2. Its activity is regulated as follows. Allosterically activated by GTP, when glutamine is the substrate; GTP has no effect on the reaction when ammonia is the substrate. The allosteric effector GTP functions by stabilizing the protein conformation that binds the tetrahedral intermediate(s) formed during glutamine hydrolysis. Inhibited by the product CTP, via allosteric rather than competitive inhibition. Its function is as follows. Catalyzes the ATP-dependent amination of UTP to CTP with either L-glutamine or ammonia as the source of nitrogen. Regulates intracellular CTP levels through interactions with the four ribonucleotide triphosphates. The sequence is that of CTP synthase from Neisseria gonorrhoeae (strain ATCC 700825 / FA 1090).